The following is a 369-amino-acid chain: Flagellar P-ring protein (369 aa).

An N-terminal signal peptide occupies residues 1–24 (MKTLHRCIGVALLALGALAGTAHA).

Belongs to the FlgI family. In terms of assembly, the basal body constitutes a major portion of the flagellar organelle and consists of four rings (L,P,S, and M) mounted on a central rod.

The protein localises to the periplasm. The protein resides in the bacterial flagellum basal body. Its function is as follows. Assembles around the rod to form the L-ring and probably protects the motor/basal body from shearing forces during rotation. The protein is Flagellar P-ring protein of Ralstonia nicotianae (strain ATCC BAA-1114 / GMI1000) (Ralstonia solanacearum).